Consider the following 551-residue polypeptide: Xylulose kinase (551 aa).

Substrate-binding residues include histidine 114, arginine 185, aspartate 295, and asparagine 296. ATP is bound by residues tryptophan 370, 456 to 457, and asparagine 460; that span reads GA.

The protein belongs to the FGGY kinase family. In terms of assembly, monomer.

It carries out the reaction D-xylulose + ATP = D-xylulose 5-phosphate + ADP + H(+). In terms of biological role, phosphorylates D-xylulose to produce D-xylulose 5-phosphate, a molecule that may play an important role in the regulation of glucose metabolism and lipogenesis. The protein is Xylulose kinase (Xylb) of Mus musculus (Mouse).